A 972-amino-acid polypeptide reads, in one-letter code: FHF complex subunit HOOK-interacting protein 1B (972 aa).

Disordered regions lie at residues 465 to 496, 510 to 547, 573 to 642, and 710 to 733; these read APSP…VPRP, SLSG…AGEL, SAPY…PGSW, and SFTC…NQLP. Phosphoserine is present on S467. Low complexity predominate over residues 479 to 490; it reads GPGSPSVDSSSV. 4 positions are modified to phosphoserine: S510, S523, S529, and S533. A compositionally biased stretch (low complexity) spans 523 to 535; sequence SPGLSASPASSPG. Over residues 618–627 the composition is skewed to gly residues; it reads GLAGGAGEGP. S859 and S897 each carry phosphoserine.

The protein belongs to the FHIP family. In terms of assembly, component of the FTS/Hook/FHIP complex (FHF complex), composed of AKTIP/FTS, FHIP1B, and one or more members of the Hook family of proteins HOOK1, HOOK2, and HOOK3. The FHF complex associates with the homotypic vesicular sorting complex (the HOPS complex).

Its function is as follows. Component of the FTS/Hook/FHIP complex (FHF complex). The FHF complex may function to promote vesicle trafficking and/or fusion via the homotypic vesicular protein sorting complex (the HOPS complex). FHF complex promotes the distribution of AP-4 complex to the perinuclear area of the cell. The polypeptide is FHF complex subunit HOOK-interacting protein 1B (FHIP1B) (Pongo abelii (Sumatran orangutan)).